The following is a 204-amino-acid chain: Translation initiation factor IF-3 (204 aa).

The tract at residues 169 to 204 is disordered; that stretch reads VPKAAPKRDSGRSESAQEAPTARSAEASRPEAPANA.

It belongs to the IF-3 family. In terms of assembly, monomer.

The protein localises to the cytoplasm. In terms of biological role, IF-3 binds to the 30S ribosomal subunit and shifts the equilibrium between 70S ribosomes and their 50S and 30S subunits in favor of the free subunits, thus enhancing the availability of 30S subunits on which protein synthesis initiation begins. This chain is Translation initiation factor IF-3, found in Deinococcus geothermalis (strain DSM 11300 / CIP 105573 / AG-3a).